The following is a 647-amino-acid chain: Protein FAM161A (647 aa).

Disordered regions lie at residues 32–55 (RELG…TSME) and 143–175 (PAQH…GDSE). A compositionally biased stretch (polar residues) spans 152-161 (SRSVSPSLAE). 2 coiled-coil regions span residues 243–268 (IKSK…ECQK) and 518–544 (AIRK…VLNK). Disordered regions lie at residues 504–524 (QTPR…KREK) and 588–647 (DEHV…IEEI). Composition is skewed to basic and acidic residues over residues 510–524 (ESSK…KREK) and 588–600 (DEHV…KKIP). A compositionally biased stretch (acidic residues) spans 613 to 638 (DLLDDEEDDKYDCESEEAEEEDAYST).

Belongs to the FAM161 family.

The protein localises to the cytoplasm. The protein resides in the cytoskeleton. Its subcellular location is the cilium basal body. It localises to the cell projection. It is found in the cilium. The protein localises to the microtubule organizing center. The protein resides in the centrosome. Its subcellular location is the centriole. Its function is as follows. Involved in ciliogenesis. This Xenopus laevis (African clawed frog) protein is Protein FAM161A (fam161a).